The chain runs to 142 residues: uncharacterized protein (142 aa).

The first 26 residues, 1-26, serve as a signal peptide directing secretion; that stretch reads MITEFIKSFLLFFFLPFFLSMPMIFA.

This is an uncharacterized protein from Schizosaccharomyces pombe (strain 972 / ATCC 24843) (Fission yeast).